The chain runs to 570 residues: Urease subunit alpha (570 aa).

Positions 131-570 (GGMDSHIHFI…LPMAQRYFLF (440 aa)) constitute a Urease domain. 3 residues coordinate Ni(2+): H136, H138, and K219. Position 219 is an N6-carboxylysine (K219). H221 is a binding site for substrate. Residues H248 and H274 each coordinate Ni(2+). Catalysis depends on H322, which acts as the Proton donor. D362 provides a ligand contact to Ni(2+).

Belongs to the metallo-dependent hydrolases superfamily. Urease alpha subunit family. In terms of assembly, heterotrimer of UreA (gamma), UreB (beta) and UreC (alpha) subunits. Three heterotrimers associate to form the active enzyme. Requires Ni cation as cofactor. In terms of processing, carboxylation allows a single lysine to coordinate two nickel ions.

The protein localises to the cytoplasm. It carries out the reaction urea + 2 H2O + H(+) = hydrogencarbonate + 2 NH4(+). Its pathway is nitrogen metabolism; urea degradation; CO(2) and NH(3) from urea (urease route): step 1/1. The protein is Urease subunit alpha of Rhizobium leguminosarum bv. trifolii (strain WSM2304).